Here is a 580-residue protein sequence, read N- to C-terminus: Peptidyl-prolyl cis-trans isomerase-like 2 (580 aa).

In terms of domain architecture, U-box spans 42 to 115 (KRLPFRFCSL…GEYIDPVTYK (74 aa)). 5 disordered regions span residues 182 to 201 (IKEGESGLSDEQLREREDPS), 227 to 259 (QERAQKAGNAASTPVAKTDAPVKSAQKTASYQS), 439 to 459 (SPTLNKLETHPVNPTTNRPTP), 479 to 530 (QKKQ…SSTT), and 553 to 580 (FVDEEPTSEPAKKKFKGIGGFGDFSSWD). The PPIase cyclophilin-type domain maps to 309–468 (QKGYARISTT…PDIRIVDVTI (160 aa)). Positions 439–457 (SPTLNKLETHPVNPTTNRP) are enriched in polar residues. The segment covering 490 to 507 (EANRTAENDEEGSRRAED) has biased composition (basic and acidic residues).

It belongs to the cyclophilin-type PPIase family. PPIL2 subfamily.

It is found in the nucleus. It catalyses the reaction [protein]-peptidylproline (omega=180) = [protein]-peptidylproline (omega=0). It carries out the reaction S-ubiquitinyl-[E2 ubiquitin-conjugating enzyme]-L-cysteine + [acceptor protein]-L-lysine = [E2 ubiquitin-conjugating enzyme]-L-cysteine + N(6)-ubiquitinyl-[acceptor protein]-L-lysine.. It participates in protein modification; protein ubiquitination. Functionally, may catalyze the cis-trans isomerization of proline imidic peptide bonds in oligopeptides thereby assisting the folding of proteins. May also function as a chaperone, playing a role in intracellular transport of proteins. May also have a protein ubiquitin ligase activity acting as an E3 ubiquitin protein ligase or as a ubiquitin-ubiquitin ligase promoting elongation of ubiquitin chains on proteins. The chain is Peptidyl-prolyl cis-trans isomerase-like 2 (cyp8) from Emericella nidulans (strain FGSC A4 / ATCC 38163 / CBS 112.46 / NRRL 194 / M139) (Aspergillus nidulans).